The chain runs to 142 residues: MSSKTDTLELSVTATTATDALYWLEHIALRDRWSARLRFTLTLCADEALNNIVSHAFTPGHPAAIHLTLRQTRREVSLHIADNGAAYDPTQALSPPLARSLDDAQPGGHGLRLMRHFMHALSYQRRDGWNHLTLTSHSAPES.

Belongs to the anti-sigma-factor family. As to quaternary structure, probably able to multimerize; interacts with BtrV.

It catalyses the reaction L-seryl-[protein] + ATP = O-phospho-L-seryl-[protein] + ADP + H(+). The catalysed reaction is L-threonyl-[protein] + ATP = O-phospho-L-threonyl-[protein] + ADP + H(+). Possible negative regulator of sigma-B activity. Phosphorylates and inactivates its specific antagonist protein, BtrV. Upon phosphorylation of BtrV, BtrW is released and binds to an unknown partner(s) that might be sigma-B, thereby blocking its ability to form a complex with its partner (possibly an RNA polymerase holoenzyme (E-sigma-B)). Involved in type III secretion system (T3SS). Phosphorylates BtrV. The chain is Serine/threonine-protein kinase BtrW (btrW) from Bordetella bronchiseptica (strain ATCC BAA-588 / NCTC 13252 / RB50) (Alcaligenes bronchisepticus).